The following is a 68-amino-acid chain: Pantinin-3 (68 aa).

A signal peptide spans M1 to A23. The residue at position 36 (L36) is a Leucine amide. A propeptide spanning residues G40 to S68 is cleaved from the precursor.

This sequence belongs to the non-disulfide-bridged peptide (NDBP) superfamily. Short antimicrobial peptide (group 4) family. Expressed by the venom gland.

The protein localises to the secreted. It is found in the target cell membrane. Functionally, amphipathic peptide that possesses relatively strong activities against Gram-positive bacteria and a fungus, but has very weak antimicrobial activities against Gram-negative bacteria. Also exhibits mild hemolytic activities against human erythrocytes (16 uM induce 70% of hemolysis). Furthermore, this peptide potently inhibits the growth of vancomycin-resistant Enterococcus (VRE) S13, a pathogen that can cause a number of human infections. Minimal inhibitory concentration (MIC) are the following: 16 uM against S.aureus, 6 uM against B.magaterium, 8 uM against M.luteus, 4 uM against VRE, 12 uM against methicillin-resistant S.aureus, 36 uM against E.coli, &gt;87 uM against P.putida, 87 uM against K.oxytoca, &gt;87 uM against E.cloacae, 84 uM against S.enterica and 17 uM against the fungus C.tropicalis. The protein is Pantinin-3 of Pandinus imperator (Emperor scorpion).